The sequence spans 845 residues: Protein P (845 aa).

The terminal protein domain (TP) stretch occupies residues 1–179 (MPLSYQHFRK…FCGSPYSWEQ (179 aa)). A spacer region spans residues 180 to 348 (ELHHGRLVIK…YCLSHLVNLL (169 aa)). A polymerase/reverse transcriptase domain (RT) region spans residues 349 to 692 (EDWGPCTEHG…YMNLYPVARQ (344 aa)). Residues 359 to 602 (EHHIRIPRTP…YSLNFMGYVI (244 aa)) enclose the Reverse transcriptase domain. Aspartate 431, aspartate 553, and aspartate 554 together coordinate Mg(2+).

The protein belongs to the hepadnaviridae P protein family.

It catalyses the reaction DNA(n) + a 2'-deoxyribonucleoside 5'-triphosphate = DNA(n+1) + diphosphate. It carries out the reaction Endonucleolytic cleavage to 5'-phosphomonoester.. With respect to regulation, activated by host HSP70 and HSP40 in vitro to be able to bind the epsilon loop of the pgRNA. Because deletion of the RNase H region renders the protein partly chaperone-independent, the chaperones may be needed indirectly to relieve occlusion of the RNA-binding site by this domain. Inhibited by several reverse-transcriptase inhibitors: Lamivudine, Adefovir and Entecavir. Functionally, multifunctional enzyme that converts the viral RNA genome into dsDNA in viral cytoplasmic capsids. This enzyme displays a DNA polymerase activity that can copy either DNA or RNA templates, and a ribonuclease H (RNase H) activity that cleaves the RNA strand of RNA-DNA heteroduplexes in a partially processive 3'- to 5'-endonucleasic mode. Neo-synthesized pregenomic RNA (pgRNA) are encapsidated together with the P protein, and reverse-transcribed inside the nucleocapsid. Initiation of reverse-transcription occurs first by binding the epsilon loop on the pgRNA genome, and is initiated by protein priming, thereby the 5'-end of (-)DNA is covalently linked to P protein. Partial (+)DNA is synthesized from the (-)DNA template and generates the relaxed circular DNA (RC-DNA) genome. After budding and infection, the RC-DNA migrates in the nucleus, and is converted into a plasmid-like covalently closed circular DNA (cccDNA). The activity of P protein does not seem to be necessary for cccDNA generation, and is presumably released from (+)DNA by host nuclear DNA repair machinery. In Homo sapiens (Human), this protein is Protein P.